Reading from the N-terminus, the 198-residue chain is Probable septum site-determining protein MinC (198 aa).

It belongs to the MinC family. Interacts with MinD and FtsZ.

Cell division inhibitor that blocks the formation of polar Z ring septums. Rapidly oscillates between the poles of the cell to destabilize FtsZ filaments that have formed before they mature into polar Z rings. Prevents FtsZ polymerization. This is Probable septum site-determining protein MinC from Thermosipho melanesiensis (strain DSM 12029 / CIP 104789 / BI429).